Reading from the N-terminus, the 157-residue chain is Transcriptional regulator MraZ (157 aa).

2 SpoVT-AbrB domains span residues 7-52 (TYTM…AGGN) and 83-126 (SETL…EPER).

Belongs to the MraZ family. Forms oligomers.

The protein resides in the cytoplasm. The protein localises to the nucleoid. The protein is Transcriptional regulator MraZ of Xanthobacter autotrophicus (strain ATCC BAA-1158 / Py2).